A 431-amino-acid chain; its full sequence is Ornithine aminotransferase, mitochondrial (431 aa).

Position 286 is an N6-(pyridoxal phosphate)lysine (Lys286).

This sequence belongs to the class-III pyridoxal-phosphate-dependent aminotransferase family. In terms of assembly, homotetramer. Pyridoxal 5'-phosphate is required as a cofactor.

The protein resides in the mitochondrion matrix. It catalyses the reaction a 2-oxocarboxylate + L-ornithine = L-glutamate 5-semialdehyde + an L-alpha-amino acid. The protein operates within amino-acid biosynthesis; L-proline biosynthesis; L-glutamate 5-semialdehyde from L-ornithine: step 1/1. This Drosophila melanogaster (Fruit fly) protein is Ornithine aminotransferase, mitochondrial (Oat).